We begin with the raw amino-acid sequence, 420 residues long: MATKTELSPTARESKNAQDMQVDETLIPRKVPSLCSARYGIALVLHFCNFTTIAQNVIMNITMVAMVNSTSPQSQLNDSSEVLPVDSFGGLSKAPKSLPAKSSILGGQFAIWEKWGPPQERSRLCSIALSGMLLGCFTAILIGGFISETLGWPFVFYIFGGVGCVCCLLWFVVIYDDPVSYPWISTSEKEYIISSLKQQVGSSKQPLPIKAMLRSLPIWSICLGCFSHQWLVSTMVVYIPTYISSVYHVNIRDNGLLSALPFIVAWVIGMVGGYLADFLLTKKFRLITVRKIATILGSLPSSALIVSLPYLNSGYITATALLTLSCGLSTLCQSGIYINVLDIAPRYSSFLMGASRGFSSIAPVIVPTVSGFLLSQDPEFGWRNVFFLLFAVNLLGLLFYLIFGEADVQEWAKERKLTRL.

The interval 1-21 is disordered; sequence MATKTELSPTARESKNAQDMQ. N-linked (GlcNAc...) asparagine glycans are attached at residues Asn49, Asn60, Asn68, and Asn77. Transmembrane regions (helical) follow at residues 126–146, 154–174, 218–238, 256–276, 292–314, 319–341, 357–377, and 385–405; these read SIAL…GGFI, FVFY…FVVI, IWSI…MVVY, LLSA…GYLA, IATI…LNSG, TALL…INVL, GFSS…LSQD, and VFFL…IFGE.

It belongs to the major facilitator superfamily. Sodium/anion cotransporter family. In terms of tissue distribution, expressed in the liver and kidney. It is detected in proximal tubules in renal cortex as well as some tubules and glomeruli, with highest expression at the apical side of proximal tubules (at protein level).

The protein localises to the endoplasmic reticulum membrane. It localises to the cell membrane. The enzyme catalyses urate(in) + Na(+)(out) = urate(out) + Na(+)(in). Functionally, transports organic anions in a voltage-driven, multispecific, manner, on the apical side of renal proximal tubule. In particular, participates in the secretion of urate from the cell into the lumen. Urate is the end product of purine metabolism. May have roles in the metabolism and secretion of estrone sulfate, estradiol-17-beta-glucuronide, ochratoxin A, as wells as drugs such as bumetanide. This is Sodium-dependent phosphate transport protein 4 (SLC17A3) from Homo sapiens (Human).